We begin with the raw amino-acid sequence, 534 residues long: Probable inorganic phosphate transporter 1-8 (534 aa).

Residues Met-1–Ala-21 are Cytoplasmic-facing. Residues Ile-22–Val-42 traverse the membrane as a helical segment. Residues Met-43–Leu-61 lie on the Extracellular side of the membrane. A helical membrane pass occupies residues Ser-62–Leu-82. The Cytoplasmic portion of the chain corresponds to Gly-83–Arg-90. Residues Val-91–Cys-111 form a helical membrane-spanning segment. The Extracellular segment spans residues Thr-112–Gly-123. The chain crosses the membrane as a helical span at residues Phe-124–Met-144. Residues Ser-145–Arg-153 are Cytoplasmic-facing. The helical transmembrane segment at Gly-154 to Val-174 threads the bilayer. The Extracellular portion of the chain corresponds to Thr-175–Ala-199. The chain crosses the membrane as a helical span at residues Asp-200 to Trp-220. Over Arg-221–Leu-281 the chain is Cytoplasmic. A helical transmembrane segment spans residues His-282 to Thr-302. Over Ser-303 to Glu-333 the chain is Extracellular. The helical transmembrane segment at Leu-334–Ile-354 threads the bilayer. At Asp-355–Lys-361 the chain is on the cytoplasmic side. A helical transmembrane segment spans residues Ile-362–Ser-382. The Extracellular portion of the chain corresponds to Trp-383–Met-396. A helical transmembrane segment spans residues Val-397 to Ile-417. The Cytoplasmic portion of the chain corresponds to Pro-418–His-431. A helical membrane pass occupies residues Gly-432–Ala-452. At Thr-453–Arg-472 the chain is on the extracellular side. The helical transmembrane segment at Ile-473 to Thr-493 threads the bilayer. Residues Lys-494–Arg-534 lie on the Cytoplasmic side of the membrane. Positions Leu-501–Arg-534 are disordered. Over residues Asn-510–Gln-519 the composition is skewed to acidic residues. Residue Ser-514 is modified to Phosphoserine. The segment covering Asp-522 to Arg-534 has biased composition (polar residues).

This sequence belongs to the major facilitator superfamily. Phosphate:H(+) symporter (TC 2.A.1.9) family. In terms of tissue distribution, in roots.

It localises to the membrane. High-affinity transporter for external inorganic phosphate. The polypeptide is Probable inorganic phosphate transporter 1-8 (PHT1-8) (Arabidopsis thaliana (Mouse-ear cress)).